The following is a 167-amino-acid chain: NADH-quinone oxidoreductase subunit B 2 (167 aa).

The [4Fe-4S] cluster site is built by cysteine 38, cysteine 39, cysteine 103, and cysteine 132.

It belongs to the complex I 20 kDa subunit family. NDH-1 is composed of 14 different subunits. Subunits NuoB, C, D, E, F, and G constitute the peripheral sector of the complex. [4Fe-4S] cluster is required as a cofactor.

The protein resides in the cell inner membrane. It catalyses the reaction a quinone + NADH + 5 H(+)(in) = a quinol + NAD(+) + 4 H(+)(out). NDH-1 shuttles electrons from NADH, via FMN and iron-sulfur (Fe-S) centers, to quinones in the respiratory chain. The immediate electron acceptor for the enzyme in this species is believed to be ubiquinone. Couples the redox reaction to proton translocation (for every two electrons transferred, four hydrogen ions are translocated across the cytoplasmic membrane), and thus conserves the redox energy in a proton gradient. The polypeptide is NADH-quinone oxidoreductase subunit B 2 (Rhizobium meliloti (strain 1021) (Ensifer meliloti)).